The primary structure comprises 53 residues: Light-harvesting protein B-800/850 alpha chain (53 aa).

Residues 1–14 (MNQGKIWTVVNPSV) are Cytoplasmic-facing. A helical membrane pass occupies residues 15-35 (GLPLLLGSVTVIAILVHAAVL). His31 provides a ligand contact to a bacteriochlorophyll. The Periplasmic portion of the chain corresponds to 36-53 (SHTTWFPAYWQGGLKKAA).

Belongs to the antenna complex alpha subunit family. The core complex is formed by different alpha and beta chains, binding bacteriochlorophyll molecules, and arranged most probably in tetrameric structures disposed around the reaction center. The non-pigmented gamma chains may constitute additional components.

Its subcellular location is the cell inner membrane. Antenna complexes are light-harvesting systems, which transfer the excitation energy to the reaction centers. The polypeptide is Light-harvesting protein B-800/850 alpha chain (Rhodoblastus acidophilus (Rhodopseudomonas acidophila)).